The chain runs to 278 residues: Large ribosomal subunit protein uL2 (278 aa).

The tract at residues 214-278 is disordered; the sequence is WLGKRPHNRG…IMRSRHQRKS (65 aa).

Belongs to the universal ribosomal protein uL2 family. In terms of assembly, part of the 50S ribosomal subunit. Forms a bridge to the 30S subunit in the 70S ribosome.

Its function is as follows. One of the primary rRNA binding proteins. Required for association of the 30S and 50S subunits to form the 70S ribosome, for tRNA binding and peptide bond formation. It has been suggested to have peptidyltransferase activity; this is somewhat controversial. Makes several contacts with the 16S rRNA in the 70S ribosome. The chain is Large ribosomal subunit protein uL2 from Chelativorans sp. (strain BNC1).